The primary structure comprises 282 residues: Shikimate dehydrogenase (NADP(+)) (282 aa).

Shikimate contacts are provided by residues 18 to 20 (SRS) and T65. Catalysis depends on K69, which acts as the Proton acceptor. E81 serves as a coordination point for NADP(+). Positions 90 and 105 each coordinate shikimate. NADP(+) contacts are provided by residues 130 to 134 (GAGGA), 154 to 159 (NRTPAR), and M222. A shikimate-binding site is contributed by Y224. An NADP(+)-binding site is contributed by G245.

It belongs to the shikimate dehydrogenase family. Homodimer.

It carries out the reaction shikimate + NADP(+) = 3-dehydroshikimate + NADPH + H(+). It functions in the pathway metabolic intermediate biosynthesis; chorismate biosynthesis; chorismate from D-erythrose 4-phosphate and phosphoenolpyruvate: step 4/7. Its function is as follows. Involved in the biosynthesis of the chorismate, which leads to the biosynthesis of aromatic amino acids. Catalyzes the reversible NADPH linked reduction of 3-dehydroshikimate (DHSA) to yield shikimate (SA). This chain is Shikimate dehydrogenase (NADP(+)), found in Acidovorax ebreus (strain TPSY) (Diaphorobacter sp. (strain TPSY)).